A 96-amino-acid polypeptide reads, in one-letter code: Large ribosomal subunit protein uL23 (96 aa).

It belongs to the universal ribosomal protein uL23 family. In terms of assembly, part of the 50S ribosomal subunit. Contacts protein L29, and trigger factor when it is bound to the ribosome.

One of the early assembly proteins it binds 23S rRNA. One of the proteins that surrounds the polypeptide exit tunnel on the outside of the ribosome. Forms the main docking site for trigger factor binding to the ribosome. The polypeptide is Large ribosomal subunit protein uL23 (Bacillus cereus (strain ATCC 10987 / NRS 248)).